The following is a 265-amino-acid chain: Ribosomal RNA small subunit methyltransferase A (265 aa).

6 residues coordinate S-adenosyl-L-methionine: histidine 17, leucine 19, glycine 44, glutamate 65, aspartate 90, and asparagine 112.

The protein belongs to the class I-like SAM-binding methyltransferase superfamily. rRNA adenine N(6)-methyltransferase family. RsmA subfamily.

The protein localises to the cytoplasm. It catalyses the reaction adenosine(1518)/adenosine(1519) in 16S rRNA + 4 S-adenosyl-L-methionine = N(6)-dimethyladenosine(1518)/N(6)-dimethyladenosine(1519) in 16S rRNA + 4 S-adenosyl-L-homocysteine + 4 H(+). Specifically dimethylates two adjacent adenosines (A1518 and A1519) in the loop of a conserved hairpin near the 3'-end of 16S rRNA in the 30S particle. May play a critical role in biogenesis of 30S subunits. This Xylella fastidiosa (strain Temecula1 / ATCC 700964) protein is Ribosomal RNA small subunit methyltransferase A.